We begin with the raw amino-acid sequence, 119 residues long: Flagellar transcriptional regulator FlhD (119 aa).

The protein belongs to the FlhD family. In terms of assembly, homodimer; disulfide-linked. Forms a heterohexamer composed of two FlhC and four FlhD subunits. Each FlhC binds a FlhD dimer, forming a heterotrimer, and a hexamer assembles by dimerization of two heterotrimers.

The protein resides in the cytoplasm. In terms of biological role, functions in complex with FlhC as a master transcriptional regulator that regulates transcription of several flagellar and non-flagellar operons by binding to their promoter region. Activates expression of class 2 flagellar genes, including fliA, which is a flagellum-specific sigma factor that turns on the class 3 genes. Also regulates genes whose products function in a variety of physiological pathways. In Shigella dysenteriae serotype 1 (strain Sd197), this protein is Flagellar transcriptional regulator FlhD.